We begin with the raw amino-acid sequence, 217 residues long: Probable transaldolase (217 aa).

The active-site Schiff-base intermediate with substrate is Lys-84.

It belongs to the transaldolase family. Type 3B subfamily.

It is found in the cytoplasm. The enzyme catalyses D-sedoheptulose 7-phosphate + D-glyceraldehyde 3-phosphate = D-erythrose 4-phosphate + beta-D-fructose 6-phosphate. The protein operates within carbohydrate degradation; pentose phosphate pathway; D-glyceraldehyde 3-phosphate and beta-D-fructose 6-phosphate from D-ribose 5-phosphate and D-xylulose 5-phosphate (non-oxidative stage): step 2/3. Functionally, transaldolase is important for the balance of metabolites in the pentose-phosphate pathway. The chain is Probable transaldolase from Roseiflexus castenholzii (strain DSM 13941 / HLO8).